The primary structure comprises 118 residues: MICOS complex subunit MIC13 (118 aa).

Residues 1-7 (MVARVWS) are Mitochondrial matrix-facing. Residues 8-26 (LMRFLIKGSVAGGAVYLVY) form a helical membrane-spanning segment. The Mitochondrial intermembrane portion of the chain corresponds to 27–118 (DQELLGPSDK…GWEYVKARTK (92 aa)).

This sequence belongs to the MICOS complex subunit Mic13 family. In terms of assembly, component of the mitochondrial contact site and cristae organizing system (MICOS) complex, composed of at least MICOS10/MIC10, CHCHD3/MIC19, CHCHD6/MIC25, APOO/MIC26, MICOS13/MIC13, APOOL/MIC27 and IMMT/MIC60. The complex associates with mitochondrial outer membrane proteins SAMM50, MTX1 and MTX2, and with HSPA9.

Its subcellular location is the mitochondrion inner membrane. Component of the MICOS complex, a large protein complex of the mitochondrial inner membrane that plays crucial roles in the maintenance of crista junctions, inner membrane architecture, and formation of contact sites to the outer membrane. Constituent of mature MICOS complex, it is required for the formation of cristae junction (CJ) and maintenance of cristae morphology. Required for the incorporation of MICOS10/MIC10 into the MICOS complex. This chain is MICOS complex subunit MIC13, found in Macaca fascicularis (Crab-eating macaque).